A 138-amino-acid polypeptide reads, in one-letter code: Translation initiation factor 5A (138 aa).

Position 37 is a hypusine (lysine 37).

The protein belongs to the eIF-5A family.

It localises to the cytoplasm. Functions by promoting the formation of the first peptide bond. The polypeptide is Translation initiation factor 5A (eIF5A) (Thermococcus sibiricus (strain DSM 12597 / MM 739)).